A 317-amino-acid chain; its full sequence is R-phycoerythrin gamma chain, chloroplastic (317 aa).

A chloroplast-targeting transit peptide spans 1–40 (MASPAFAVNGMFTPVKLSGSFTASMPVDSKPAASATGVRM). 2 residues coordinate phycourobilin: C94 and C133. (2R,3E)-phycoerythrobilin is bound at residue C210. Phycourobilin is bound at residue C297.

Heteromer of 1 alpha, 1 beta and 2 gamma chains. Post-translationally, contains four covalently linked bilin chromophores.

Its subcellular location is the plastid. It is found in the chloroplast thylakoid membrane. Critical for the incorporation of phycoerythrin in the phycobilisome complex. In Aglaothamnion neglectum (Red alga), this protein is R-phycoerythrin gamma chain, chloroplastic.